We begin with the raw amino-acid sequence, 100 residues long: Small ribosomal subunit protein uS14c (100 aa).

It belongs to the universal ribosomal protein uS14 family. As to quaternary structure, part of the 30S ribosomal subunit.

The protein resides in the plastid. Functionally, binds 16S rRNA, required for the assembly of 30S particles. In Aneura mirabilis (Parasitic liverwort), this protein is Small ribosomal subunit protein uS14c.